Consider the following 942-residue polypeptide: Diacylglycerol kinase theta (942 aa).

The disordered stretch occupies residues 1 to 59 (MAAAAEPGARAWLGGGSPRPGSPACSPVLGSGGRARPGPGPGPGPERAGVRAPGPAAAP). Phosphoserine occurs at positions 22 and 26. Residues 45–59 (PERAGVRAPGPAAAP) show a composition bias toward low complexity. 3 consecutive Phorbol-ester/DAG-type zinc fingers follow at residues 60-108 (GHSF…RIPC), 121-168 (AHCF…CSDC), and 183-234 (HHHW…APEC). A disordered region spans residues 269–295 (EPGEGGDGADGSAAVGPGRETQATPES). Residues 395 to 494 (AQEVLKIYPG…TRFYVAESRD (100 aa)) form the Ras-associating domain. 2 short sequence motifs (LXXLL motif) span residues 555-559 (LYMLL) and 574-578 (LPDLL). Residues 584-721 (PDSCPLLVFV…MDRWTILLDA (138 aa)) form the DAGKc domain. The disordered stretch occupies residues 908-942 (PKVHMLRKAKQKPRRAGTTRDARADAAPAPESDPR). Positions 911–924 (HMLRKAKQKPRRAG) are enriched in basic residues. The segment covering 932–942 (DAAPAPESDPR) has biased composition (low complexity).

Belongs to the eukaryotic diacylglycerol kinase family. As to quaternary structure, interacts with RHOA (constitutively activated, GTP-bound); the interaction inhibits DGKQ. Interacts with PRKCE. Interacts with PRKCH. Interacts with PLCB1. Interacts with NR5A1; the interaction requires both LXXLL motifs in DGKQ and is required for full phosphatidic acid-mediated activation of NR5A1. In terms of processing, phosphorylated by PRKCE and PRKCH in vitro.

It localises to the cytoplasm. It is found in the cytosol. The protein resides in the cell membrane. Its subcellular location is the synapse. The protein localises to the cytoskeleton. It localises to the nucleus. It is found in the nucleus speckle. The protein resides in the nucleus matrix. The catalysed reaction is a 1,2-diacyl-sn-glycerol + ATP = a 1,2-diacyl-sn-glycero-3-phosphate + ADP + H(+). The enzyme catalyses a 1-O-alkyl-sn-glycerol + ATP = a 1-O-alkyl-sn-glycero-3-phosphate + ADP + H(+). It catalyses the reaction 1-O-alkyl-2-acyl-sn-glycerol + ATP = 1-O-alkyl-2-acyl-sn-glycero-3-phosphate + ADP + H(+). It carries out the reaction 1,2-di-(9Z-octadecenoyl)-sn-glycerol + ATP = 1,2-di-(9Z-octadecenoyl)-sn-glycero-3-phosphate + ADP + H(+). The catalysed reaction is 1-O-hexadecyl-sn-glycerol + ATP = 1-O-hexadecyl-sn-glycero-3-phosphate + ADP + H(+). The enzyme catalyses 1-O-hexadecyl-2-acetyl-sn-glycerol + ATP = 1-O-hexadecyl-2-acetyl-sn-glycero-3-phosphate + ADP + H(+). It catalyses the reaction 1-octadecanoyl-2-(5Z,8Z,11Z,14Z-eicosatetraenoyl)-sn-glycerol + ATP = 1-octadecanoyl-2-(5Z,8Z,11Z,14Z-eicosatetraenoyl)-sn-glycero-3-phosphate + ADP + H(+). The protein operates within lipid metabolism; glycerolipid metabolism. Its activity is regulated as follows. Activated by phosphatidylserine. In terms of biological role, diacylglycerol kinase that converts diacylglycerol/DAG into phosphatidic acid/phosphatidate/PA and regulates the respective levels of these two bioactive lipids. Thereby, acts as a central switch between the signaling pathways activated by these second messengers with different cellular targets and opposite effects in numerous biological processes. Within the adrenocorticotropic hormone signaling pathway, produces phosphatidic acid which in turn activates NR5A1 and subsequent steroidogenic gene transcription. Also functions downstream of the nerve growth factor signaling pathway being specifically activated in the nucleus by the growth factor. Through its diacylglycerol activity also regulates synaptic vesicle endocytosis. This Homo sapiens (Human) protein is Diacylglycerol kinase theta.